We begin with the raw amino-acid sequence, 101 residues long: Small ribosomal subunit protein uS14 (101 aa).

Basic and acidic residues predominate over residues 1 to 10 (MAKKSSIEKN). The tract at residues 1–23 (MAKKSSIEKNNRRKRMTGNAAAK) is disordered.

The protein belongs to the universal ribosomal protein uS14 family. Part of the 30S ribosomal subunit. Contacts proteins S3 and S10.

Functionally, binds 16S rRNA, required for the assembly of 30S particles and may also be responsible for determining the conformation of the 16S rRNA at the A site. The sequence is that of Small ribosomal subunit protein uS14 from Nitrobacter hamburgensis (strain DSM 10229 / NCIMB 13809 / X14).